Reading from the N-terminus, the 512-residue chain is Ribose import ATP-binding protein RbsA 2 (512 aa).

ABC transporter domains lie at 22–258 (LEMR…VGRD) and 263–512 (FPKV…TGNA). 54–61 (GENGAGKS) provides a ligand contact to ATP.

Belongs to the ABC transporter superfamily. Ribose importer (TC 3.A.1.2.1) family. In terms of assembly, the complex is composed of an ATP-binding protein (RbsA), two transmembrane proteins (RbsC) and a solute-binding protein (RbsB).

Its subcellular location is the cell inner membrane. It carries out the reaction D-ribose(out) + ATP + H2O = D-ribose(in) + ADP + phosphate + H(+). Part of the ABC transporter complex RbsABC involved in ribose import. Responsible for energy coupling to the transport system. The sequence is that of Ribose import ATP-binding protein RbsA 2 from Rhizobium johnstonii (strain DSM 114642 / LMG 32736 / 3841) (Rhizobium leguminosarum bv. viciae).